We begin with the raw amino-acid sequence, 130 residues long: MYRAVTRRIEVTVEPNYLPERSSAENRQYFWSYTVVITNSGEETVKLRTRHWVITDASGRTQEVRGEGVVGEQPVLAPGERFEYTSGVPLPTASGFMAGRYQMETEAGEKFEIDVPPFSLDSPEGKRTLN.

In terms of domain architecture, ApaG spans 3–127 (RAVTRRIEVT…FSLDSPEGKR (125 aa)).

This is Protein ApaG from Rhodopseudomonas palustris (strain ATCC BAA-98 / CGA009).